We begin with the raw amino-acid sequence, 187 residues long: Benzene 1,2-dioxygenase subunit beta (187 aa).

The protein belongs to the bacterial ring-hydroxylating dioxygenase beta subunit family. As to quaternary structure, this dioxygenase system consists of four proteins: the two subunits of the hydroxylase component (BedC1 and BedC2), a ferredoxin (BedB) and a ferredoxin reductase (BedA).

It carries out the reaction benzene + NADH + O2 + H(+) = cis-1,2-dihydrobenzene-1,2-diol + NAD(+). The protein operates within aromatic compound metabolism; benzene degradation; catechol from benzene: step 1/2. The beta subunit may be responsible for the substrate specificity of the enzyme. The protein is Benzene 1,2-dioxygenase subunit beta (bedC2) of Pseudomonas putida (Arthrobacter siderocapsulatus).